The following is an 861-amino-acid chain: Leucine--tRNA ligase (861 aa).

A 'HIGH' region motif is present at residues 42–52 (PYPSGRIHMGH). The 'KMSKS' region motif lies at 623–627 (KMSKS). K626 is a binding site for ATP.

It belongs to the class-I aminoacyl-tRNA synthetase family.

Its subcellular location is the cytoplasm. The enzyme catalyses tRNA(Leu) + L-leucine + ATP = L-leucyl-tRNA(Leu) + AMP + diphosphate. This chain is Leucine--tRNA ligase, found in Caulobacter sp. (strain K31).